The sequence spans 246 residues: Probable maleylacetoacetate isomerase 1 (246 aa).

The GST N-terminal domain maps to 32–116 (TKPILYSYWP…YLEETRPQPA (85 aa)). Glutathione-binding positions include 42-47 (SSCSWR), Val88, 100-101 (DS), Gln140, and 144-146 (NVS). One can recognise a GST C-terminal domain in the interval 121–241 (DPVKRAKIRE…HPSTQPDCPP (121 aa)).

It belongs to the GST superfamily. Zeta family. Requires glutathione as cofactor.

It localises to the cytoplasm. It catalyses the reaction 4-maleylacetoacetate = 4-fumarylacetoacetate. The enzyme catalyses RX + glutathione = an S-substituted glutathione + a halide anion + H(+). The protein operates within amino-acid degradation; L-phenylalanine degradation; acetoacetate and fumarate from L-phenylalanine: step 5/6. Catalyzes the glutathione dependent oxygenation of dichloroacetic acid to glyoxylic acid in vitro. Possesses low glutathione thioltransferase activity toward 4-hydroxynonenal (4-HNE). Has no glutathione thioltransferase activity with adrenochrome, phenethyl isothiocyanate (PEITC), 5-hydroperoxyeicosatetraenoic acid ((5S)-HpETE), prostaglandin A2 (PGA2) or 2-hydroxyethyldisulfide (HED). This Drosophila melanogaster (Fruit fly) protein is Probable maleylacetoacetate isomerase 1 (GstZ1).